We begin with the raw amino-acid sequence, 297 residues long: N-acetylneuraminate lyase (297 aa).

Aceneuramate contacts are provided by Ser47 and Thr48. Tyr137 acts as the Proton donor in catalysis. Lys165 (schiff-base intermediate with substrate) is an active-site residue. The aceneuramate site is built by Thr167, Gly189, Asp191, Glu192, and Ser208.

The protein belongs to the DapA family. NanA subfamily. Homotetramer.

The protein resides in the cytoplasm. It carries out the reaction aceneuramate = aldehydo-N-acetyl-D-mannosamine + pyruvate. Its pathway is amino-sugar metabolism; N-acetylneuraminate degradation; D-fructose 6-phosphate from N-acetylneuraminate: step 1/5. Its function is as follows. Catalyzes the reversible aldol cleavage of N-acetylneuraminic acid (sialic acid; Neu5Ac) to form pyruvate and N-acetylmannosamine (ManNAc) via a Schiff base intermediate. The chain is N-acetylneuraminate lyase from Escherichia coli (strain SMS-3-5 / SECEC).